Here is a 375-residue protein sequence, read N- to C-terminus: Queuine tRNA-ribosyltransferase (375 aa).

Asp90 serves as the catalytic Proton acceptor. Substrate-binding positions include 90 to 94 (DSGGF), Asp144, Gln193, and Gly220. The segment at 251–257 (GVGTPED) is RNA binding. The active-site Nucleophile is Asp270. The segment at 275–279 (TRNAR) is RNA binding; important for wobble base 34 recognition. Residues Cys308, Cys310, Cys313, and His339 each contribute to the Zn(2+) site.

This sequence belongs to the queuine tRNA-ribosyltransferase family. Homodimer. Within each dimer, one monomer is responsible for RNA recognition and catalysis, while the other monomer binds to the replacement base PreQ1. It depends on Zn(2+) as a cofactor.

It catalyses the reaction 7-aminomethyl-7-carbaguanine + guanosine(34) in tRNA = 7-aminomethyl-7-carbaguanosine(34) in tRNA + guanine. Its pathway is tRNA modification; tRNA-queuosine biosynthesis. Functionally, catalyzes the base-exchange of a guanine (G) residue with the queuine precursor 7-aminomethyl-7-deazaguanine (PreQ1) at position 34 (anticodon wobble position) in tRNAs with GU(N) anticodons (tRNA-Asp, -Asn, -His and -Tyr). Catalysis occurs through a double-displacement mechanism. The nucleophile active site attacks the C1' of nucleotide 34 to detach the guanine base from the RNA, forming a covalent enzyme-RNA intermediate. The proton acceptor active site deprotonates the incoming PreQ1, allowing a nucleophilic attack on the C1' of the ribose to form the product. After dissociation, two additional enzymatic reactions on the tRNA convert PreQ1 to queuine (Q), resulting in the hypermodified nucleoside queuosine (7-(((4,5-cis-dihydroxy-2-cyclopenten-1-yl)amino)methyl)-7-deazaguanosine). This chain is Queuine tRNA-ribosyltransferase, found in Methylibium petroleiphilum (strain ATCC BAA-1232 / LMG 22953 / PM1).